The chain runs to 1169 residues: C5a peptidase (1169 aa).

The N-terminal stretch at 1-31 (MRKKQKLPFDKLAIALMSTSILLNAQSDIKA) is a signal peptide. Residues 33-111 (TVTEDTPATE…ETIRDLNDPS (79 aa)) form a disordered region. Residues 48–67 (PQQTAVSEEAPSSSSKETNP) are compositionally biased toward polar residues. The Peptidase S8 domain occupies 101-583 (KETIRDLNDP…AGAVDAKKAS (483 aa)). Over residues 102-111 (ETIRDLNDPS) the composition is skewed to basic and acidic residues. Residues aspartate 132, histidine 195, and serine 514 each act as charge relay system in the active site. Residues 1028 to 1135 (NLLEGHSNKP…RDQLPTTNDK (108 aa)) form a disordered region. 3 stretches are compositionally biased toward basic and acidic residues: residues 1033–1056 (HSNKPEQDGSDQVPDKTPETKPEQ), 1063–1073 (PDKKPEAKPEQ), and 1080–1092 (PDKKPETKPEKDS). Repeat copies occupy residues 1036–1052 (KPEQDGSDQVPDKTPET), 1053–1069 (KPEQDGSGQAPDKKPEA), 1070–1086 (KPEQDGSGQAPDKKPET), and 1087–1103 (KPEKDSSGQTPGKTPQK). A 4 X 17 AA tandem repeats region spans residues 1036–1103 (KPEQDGSDQV…GQTPGKTPQK (68 aa)). Residues 1093 to 1108 (SGQTPGKTPQKGQPSR) show a composition bias toward polar residues. The LPXTG sorting signal motif lies at 1129–1133 (LPTTN). Pentaglycyl murein peptidoglycan amidated threonine is present on threonine 1132. A propeptide spans 1133-1169 (NDKDTNRLHLLKLVMTTFFFGLVAHIFKTKRQKETKK) (removed by sortase).

The protein belongs to the peptidase S8 family. Cleaved by SpeB protease; leading to its degradation. Degradation by SpeB is probably strictly regulated to preserve integrity of C5a peptidase.

It localises to the secreted. The protein localises to the cell wall. The enzyme catalyses The primary cleavage site is at 67-His-|-Lys-68 in human C5a with a minor secondary cleavage site at 58-Ala-|-Ser-59.. Its function is as follows. This virulence factor of S.pyogenes specifically cleaves the human serum chemotaxin C5a at '68-Lys-|-Asp-69' bond near its C-terminus, destroying its ability to serve as a chemoattractant. This chain is C5a peptidase (scpA), found in Streptococcus pyogenes serotype M3 (strain ATCC BAA-595 / MGAS315).